Consider the following 302-residue polypeptide: Sulfate adenylyltransferase subunit 2 (302 aa).

Belongs to the PAPS reductase family. CysD subfamily. As to quaternary structure, heterodimer composed of CysD, the smaller subunit, and CysN.

The enzyme catalyses sulfate + ATP + H(+) = adenosine 5'-phosphosulfate + diphosphate. The protein operates within sulfur metabolism; hydrogen sulfide biosynthesis; sulfite from sulfate: step 1/3. Its function is as follows. With CysN forms the ATP sulfurylase (ATPS) that catalyzes the adenylation of sulfate producing adenosine 5'-phosphosulfate (APS) and diphosphate, the first enzymatic step in sulfur assimilation pathway. APS synthesis involves the formation of a high-energy phosphoric-sulfuric acid anhydride bond driven by GTP hydrolysis by CysN coupled to ATP hydrolysis by CysD. This is Sulfate adenylyltransferase subunit 2 from Baumannia cicadellinicola subsp. Homalodisca coagulata.